Here is a 679-residue protein sequence, read N- to C-terminus: Dihydroxyacetone phosphate acyltransferase (679 aa).

Ser-11 is subject to Phosphoserine. The HXXXXD motif motif lies at 161 to 166 (HRSYID). Lys-642 is modified (N6-acetyllysine).

The protein belongs to the GPAT/DAPAT family. As to quaternary structure, part of a heterotrimeric complex composed of GNPAT, AGPS and a modified form of GNPAT.

The protein localises to the peroxisome membrane. It catalyses the reaction dihydroxyacetone phosphate + an acyl-CoA = a 1-acylglycerone 3-phosphate + CoA. The enzyme catalyses dihydroxyacetone phosphate + hexadecanoyl-CoA = 1-hexadecanoylglycerone 3-phosphate + CoA. The protein operates within membrane lipid metabolism; glycerophospholipid metabolism. Dihydroxyacetonephosphate acyltransferase catalyzing the first step in the biosynthesis of plasmalogens, a subset of phospholipids that differ from other glycerolipids by having an alkyl chain attached through a vinyl ether linkage at the sn-1 position of the glycerol backbone, and which unique physical properties have an impact on various aspects of cell signaling and membrane biology. This Oryctolagus cuniculus (Rabbit) protein is Dihydroxyacetone phosphate acyltransferase.